We begin with the raw amino-acid sequence, 357 residues long: Putative RING-H2 finger protein ATL37 (357 aa).

Residues 1-31 form the signal peptide; the sequence is MTIFTRDFSHRILACVLLPLFLFQCLPYVTC. Residues 47-67 form a helical membrane-spanning segment; the sequence is SSIIGIVLLSLFLLLLVVYCL. The RING-type; atypical zinc-finger motif lies at 120–162; the sequence is CAICLCEFEDEEPLRWMPPCSHTFHANCIDEWLSSRSTCPVCR. Residues 172-210 form a disordered region; that stretch reads SFPHPSMDVETGNAQRGVQESPDERSLTGSSVTCNNNAN. Residues 198–210 are compositionally biased toward polar residues; the sequence is LTGSSVTCNNNAN. Ser-273 carries the phosphoserine modification. Disordered regions lie at residues 281–304 and 327–357; these read RSSR…QGRQ and LDRD…PEKN. Over residues 283 to 304 the composition is skewed to polar residues; it reads SRQGYRSGSVGNERTGFSQGRQ. Positions 340-357 are enriched in basic and acidic residues; it reads NDKDFGERSFQRLMPEKN.

Belongs to the RING-type zinc finger family. ATL subfamily.

The protein resides in the membrane. The catalysed reaction is S-ubiquitinyl-[E2 ubiquitin-conjugating enzyme]-L-cysteine + [acceptor protein]-L-lysine = [E2 ubiquitin-conjugating enzyme]-L-cysteine + N(6)-ubiquitinyl-[acceptor protein]-L-lysine.. The protein operates within protein modification; protein ubiquitination. In Arabidopsis thaliana (Mouse-ear cress), this protein is Putative RING-H2 finger protein ATL37 (ATL37).